Here is a 316-residue protein sequence, read N- to C-terminus: uncharacterized protein (316 aa).

Belongs to the chlamydial CPn_0441/CT_007/TC_0275 family.

This is an uncharacterized protein from Chlamydia pneumoniae (Chlamydophila pneumoniae).